The following is a 450-amino-acid chain: Molybdate-anion transporter (450 aa).

Transmembrane regions (helical) follow at residues 1–21 (MLVT…GLEL), 43–63 (LDFY…APYL), 79–99 (ILYV…SSLV), 128–148 (FVLL…FSAF), 174–194 (AAFW…AVAS), 195–215 (WIGL…ALAG), 249–269 (VLLL…FVFL), 278–298 (GAPL…GSSL), 311–331 (PMHL…MLTF), 344–364 (FIAF…MSFL), 376–396 (GVLN…LLVL), and 409–429 (FSIC…LFTV).

It belongs to the major facilitator superfamily.

It is found in the cell membrane. Its function is as follows. Mediates high-affinity intracellular uptake of the rare oligo-element molybdenum. The protein is Molybdate-anion transporter (MFSD5) of Pongo abelii (Sumatran orangutan).